Consider the following 673-residue polypeptide: DNA ligase (673 aa).

Residues 33–37, 82–83, and E113 each bind NAD(+); these read DYEYD and SL. The active-site N6-AMP-lysine intermediate is K115. NAD(+) contacts are provided by R136, E170, K285, and K309. Zn(2+) contacts are provided by C403, C406, C421, and C426. The region spanning 583 to 672 is the BRCT domain; the sequence is AKSDILKGYT…SREEAEKILM (90 aa).

It belongs to the NAD-dependent DNA ligase family. LigA subfamily. The cofactor is Mg(2+). Mn(2+) serves as cofactor.

It catalyses the reaction NAD(+) + (deoxyribonucleotide)n-3'-hydroxyl + 5'-phospho-(deoxyribonucleotide)m = (deoxyribonucleotide)n+m + AMP + beta-nicotinamide D-nucleotide.. Functionally, DNA ligase that catalyzes the formation of phosphodiester linkages between 5'-phosphoryl and 3'-hydroxyl groups in double-stranded DNA using NAD as a coenzyme and as the energy source for the reaction. It is essential for DNA replication and repair of damaged DNA. This chain is DNA ligase, found in Caldicellulosiruptor bescii (strain ATCC BAA-1888 / DSM 6725 / KCTC 15123 / Z-1320) (Anaerocellum thermophilum).